Here is a 260-residue protein sequence, read N- to C-terminus: Purine nucleoside phosphorylase PD_1754 (260 aa).

His-79, Cys-120, and His-137 together coordinate Zn(2+).

It belongs to the purine nucleoside phosphorylase YfiH/LACC1 family. As to quaternary structure, homodimer. Cu(2+) is required as a cofactor. Requires Zn(2+) as cofactor.

The enzyme catalyses adenosine + phosphate = alpha-D-ribose 1-phosphate + adenine. It carries out the reaction S-methyl-5'-thioadenosine + phosphate = 5-(methylsulfanyl)-alpha-D-ribose 1-phosphate + adenine. It catalyses the reaction inosine + phosphate = alpha-D-ribose 1-phosphate + hypoxanthine. The catalysed reaction is adenosine + H2O + H(+) = inosine + NH4(+). Its function is as follows. Purine nucleoside enzyme that catalyzes the phosphorolysis of adenosine and inosine nucleosides, yielding D-ribose 1-phosphate and the respective free bases, adenine and hypoxanthine. Also catalyzes the phosphorolysis of S-methyl-5'-thioadenosine into adenine and S-methyl-5-thio-alpha-D-ribose 1-phosphate. Also has adenosine deaminase activity. The polypeptide is Purine nucleoside phosphorylase PD_1754 (Xylella fastidiosa (strain Temecula1 / ATCC 700964)).